The following is a 292-amino-acid chain: 4-hydroxy-tetrahydrodipicolinate synthase (292 aa).

Thr45 is a binding site for pyruvate. Tyr133 serves as the catalytic Proton donor/acceptor. Residue Lys161 is the Schiff-base intermediate with substrate of the active site. Residue Ile203 participates in pyruvate binding.

This sequence belongs to the DapA family. Homotetramer; dimer of dimers.

It localises to the cytoplasm. It catalyses the reaction L-aspartate 4-semialdehyde + pyruvate = (2S,4S)-4-hydroxy-2,3,4,5-tetrahydrodipicolinate + H2O + H(+). It functions in the pathway amino-acid biosynthesis; L-lysine biosynthesis via DAP pathway; (S)-tetrahydrodipicolinate from L-aspartate: step 3/4. Its function is as follows. Catalyzes the condensation of (S)-aspartate-beta-semialdehyde [(S)-ASA] and pyruvate to 4-hydroxy-tetrahydrodipicolinate (HTPA). The chain is 4-hydroxy-tetrahydrodipicolinate synthase from Nitrosomonas eutropha (strain DSM 101675 / C91 / Nm57).